The chain runs to 499 residues: Glutamate--tRNA ligase (499 aa).

Residues 12-22 carry the 'HIGH' region motif; sequence PSPTGHLHIGN. A 'KMSKS' region motif is present at residues 259–263; the sequence is KLSKR. Lys-262 provides a ligand contact to ATP.

It belongs to the class-I aminoacyl-tRNA synthetase family. Glutamate--tRNA ligase type 1 subfamily. As to quaternary structure, monomer.

Its subcellular location is the cytoplasm. The enzyme catalyses tRNA(Glu) + L-glutamate + ATP = L-glutamyl-tRNA(Glu) + AMP + diphosphate. Its function is as follows. Catalyzes the attachment of glutamate to tRNA(Glu) in a two-step reaction: glutamate is first activated by ATP to form Glu-AMP and then transferred to the acceptor end of tRNA(Glu). The protein is Glutamate--tRNA ligase of Lactobacillus acidophilus (strain ATCC 700396 / NCK56 / N2 / NCFM).